Here is a 350-residue protein sequence, read N- to C-terminus: 3-isopropylmalate dehydrogenase (350 aa).

71 to 84 serves as a coordination point for NAD(+); that stretch reads GPKWADAPRHLRPE. Substrate-binding residues include arginine 91, arginine 101, arginine 129, and aspartate 220. Mg(2+)-binding residues include aspartate 220, aspartate 244, and aspartate 248. Position 279 to 291 (279 to 291) interacts with NAD(+); the sequence is GSAPDIAGKGLAN.

Belongs to the isocitrate and isopropylmalate dehydrogenases family. LeuB type 1 subfamily. Homodimer. Requires Mg(2+) as cofactor. Mn(2+) is required as a cofactor.

The protein resides in the cytoplasm. The catalysed reaction is (2R,3S)-3-isopropylmalate + NAD(+) = 4-methyl-2-oxopentanoate + CO2 + NADH. Its pathway is amino-acid biosynthesis; L-leucine biosynthesis; L-leucine from 3-methyl-2-oxobutanoate: step 3/4. Catalyzes the oxidation of 3-carboxy-2-hydroxy-4-methylpentanoate (3-isopropylmalate) to 3-carboxy-4-methyl-2-oxopentanoate. The product decarboxylates to 4-methyl-2 oxopentanoate. This chain is 3-isopropylmalate dehydrogenase, found in Caulobacter vibrioides (strain ATCC 19089 / CIP 103742 / CB 15) (Caulobacter crescentus).